Here is a 474-residue protein sequence, read N- to C-terminus: TOM1-like protein 1 (474 aa).

One can recognise a VHS domain in the interval 22–154 (ATFAGVLTED…DLLKKGVQFP (133 aa)). Residues 153-180 (FPPSDGEPETRQEAGQISPNRPTSVPTA) form a disordered region. The span at 165-178 (EAGQISPNRPTSVP) shows a compositional bias: polar residues. Position 170 is a phosphoserine (Ser170). The region spanning 199 to 287 (EQIGKLHSEL…AVLGYERFTR (89 aa)) is the GAT domain. The segment at 291-317 (RLLEQKRNRTEATRTSSEPSAPSCDLL) is disordered. A compositionally biased stretch (basic and acidic residues) spans 293–302 (LEQKRNRTEA). 2 positions are modified to phosphoserine: Ser313 and Ser320. An interaction with GRB2 region spans residues 392-395 (YDNF). Positions 420–424 (LPPLP) match the SH3-binding motif. An interaction with PIK3R1 region spans residues 441–444 (YEVM). Tyr457 carries the post-translational modification Phosphotyrosine. Residues 457–460 (YEEI) carry the SH2-binding motif.

It belongs to the TOM1 family. As to quaternary structure, interacts with LYN. Interacts with the SH2 and SH3 domains of FYN when phosphorylated. Also interacts with GRB2 and PIK3R1 when phosphorylated. In terms of processing, phosphorylated on tyrosines by LYN. Phosphorylated on tyrosines by FYN. Strongly expressed in brain and kidney, expressed at intermediate levels skin and heart, and weakly expressed in thymus. Not expressed in liver and spleen.

It is found in the golgi apparatus. It localises to the golgi stack. Its subcellular location is the endosome membrane. The protein resides in the cytoplasm. The protein localises to the membrane. Functionally, probable adapter protein involved in signaling pathways. Interacts with the SH2 and SH3 domains of various signaling proteins when it is phosphorylated. May promote FYN activation, possibly by disrupting intramolecular SH3-dependent interactions. This is TOM1-like protein 1 (Tom1l1) from Mus musculus (Mouse).